Consider the following 627-residue polypeptide: uncharacterized protein (627 aa).

Residues 1-20 (MAKFKKDLTTKNKDTDRLSE) are compositionally biased toward basic and acidic residues. Disordered regions lie at residues 1–22 (MAKF…SEEI) and 578–606 (LSLG…LLPV). A compositionally biased stretch (acidic residues) spans 582-592 (SEEEQGQEETE).

This is an uncharacterized protein from Rickettsia prowazekii (strain Madrid E).